A 385-amino-acid chain; its full sequence is Photoreceptor ankyrin repeat protein (385 aa).

ANK repeat units lie at residues 17-46 (CNLK…SPEE), 53-83 (NGRT…DVNQ), 87-116 (DGNT…GLDL), 122-151 (RGLT…DLSS), and 156-190 (RGKT…QLSL). The tract at residues 270–385 (LGTRGKSVPE…GGLGQAGGSK (116 aa)) is disordered. A compositionally biased stretch (pro residues) spans 284 to 297 (APPPPPEPHPPQQV). Residues 304–326 (APNQSPQSMFSQWLQSRDSTRSQ) show a composition bias toward polar residues. Residues 361–373 (FQERKKKEEETEP) show a composition bias toward basic and acidic residues. Over residues 374 to 385 (RGGGLGQAGGSK) the composition is skewed to gly residues.

In terms of tissue distribution, isoform 1: Expressed predominantly in the retina. Isoform 2: Expressed in the pineal gland.

The protein resides in the cytoplasm. The protein localises to the cytosol. It localises to the nucleus. In terms of biological role, acts as a transcriptional repressor for CRX-activated photoreceptor gene regulation. The protein is Photoreceptor ankyrin repeat protein of Mus musculus (Mouse).